We begin with the raw amino-acid sequence, 411 residues long: 2,3-bisphosphoglycerate-independent phosphoglycerate mutase (411 aa).

Belongs to the BPG-independent phosphoglycerate mutase family. A-PGAM subfamily. In terms of assembly, homotetramer. Mg(2+) is required as a cofactor.

The catalysed reaction is (2R)-2-phosphoglycerate = (2R)-3-phosphoglycerate. Its pathway is carbohydrate degradation; glycolysis; pyruvate from D-glyceraldehyde 3-phosphate: step 3/5. Its activity is regulated as follows. Inhibited to approximately 20% by EDTA. Catalyzes the interconversion of 2-phosphoglycerate and 3-phosphoglycerate. The sequence is that of 2,3-bisphosphoglycerate-independent phosphoglycerate mutase (apgM) from Pyrococcus furiosus (strain ATCC 43587 / DSM 3638 / JCM 8422 / Vc1).